The primary structure comprises 561 residues: Urocanate hydratase (561 aa).

NAD(+) is bound by residues 52–53 (GG), Q130, 176–178 (GMG), E196, R201, 242–243 (NA), 263–267 (QTSAH), 273–274 (YL), and Y322. The active site involves C410. Residue G492 coordinates NAD(+).

It belongs to the urocanase family. NAD(+) serves as cofactor.

Its subcellular location is the cytoplasm. It catalyses the reaction 4-imidazolone-5-propanoate = trans-urocanate + H2O. It functions in the pathway amino-acid degradation; L-histidine degradation into L-glutamate; N-formimidoyl-L-glutamate from L-histidine: step 2/3. In terms of biological role, catalyzes the conversion of urocanate to 4-imidazolone-5-propionate. The polypeptide is Urocanate hydratase (Salmonella newport (strain SL254)).